The chain runs to 363 residues: tRNA(Met) cytidine acetate ligase (363 aa).

ATP contacts are provided by residues 7 to 20 (IAEF…HKYL), glycine 96, asparagine 152, and arginine 175.

This sequence belongs to the TmcAL family.

It localises to the cytoplasm. It carries out the reaction cytidine(34) in elongator tRNA(Met) + acetate + ATP = N(4)-acetylcytidine(34) in elongator tRNA(Met) + AMP + diphosphate. Catalyzes the formation of N(4)-acetylcytidine (ac(4)C) at the wobble position of elongator tRNA(Met), using acetate and ATP as substrates. First activates an acetate ion to form acetyladenylate (Ac-AMP) and then transfers the acetyl group to tRNA to form ac(4)C34. In Streptococcus thermophilus (strain ATCC BAA-491 / LMD-9), this protein is tRNA(Met) cytidine acetate ligase.